The following is a 421-amino-acid chain: O-glycosyltransferase braB (421 aa).

A disordered region spans residues 1-26 (MVPSVMEGAPQLGITSTDTSSAGVPP). The segment covering 13–22 (GITSTDTSSA) has biased composition (polar residues).

This sequence belongs to the afumC glycosyltransferase family.

It functions in the pathway secondary metabolite biosynthesis. Its function is as follows. O-glycosyltransferase; part of the gene cluster that mediates the biosynthesis of the brasilane terpene glycosides brasilane D and E. The biosynthesis starts with the activity of the terpene cyclase braA that converts farnesyl pyrophosphate into the sesquiterpene alcohol trichobrasilenol. Subsequently, trichobrasilenol is glycosylated by the O-glycosyltransferase braB putatively using UDP-GlcNAc as sugar donor to yield brasilane A. The latter then undergoes two rounds of oxidation performed by the cytochrome P450 monooxygenase braC. In the first round braC hydroxylates C-12 forming brasilane D, which serves as substrate in the second round to establish the epoxide at the bond between C-5 and C-10 and oxidize the alcohol at C-12 to an aldehyde leading to the final product brasilane E. BraB is also able to glycosylate geraniol, linalool, perillyl alcohol, 3,4-dichlorophenol and, to a lesser extend, benzyl alcohol. The chain is O-glycosyltransferase braB from Annulohypoxylon truncatum (Hypoxylon truncatum).